The sequence spans 346 residues: Probable RNA methyltransferase PA1839 (346 aa).

Glu91 serves as the catalytic Proton acceptor. The Radical SAM core domain maps to 94–320 (LLPRGGLCVS…TKVRNSAGQD (227 aa)). Residues Cys101 and Cys325 are joined by a disulfide bond. Positions 108, 112, and 115 each coordinate [4Fe-4S] cluster. Residues 153–154 (GE), Ser183, 206–208 (SLH), and Asn282 each bind S-adenosyl-L-methionine. Cys325 functions as the S-methylcysteine intermediate in the catalytic mechanism.

This sequence belongs to the radical SAM superfamily. RlmN family. [4Fe-4S] cluster is required as a cofactor.

The protein localises to the cytoplasm. The polypeptide is Probable RNA methyltransferase PA1839 (Pseudomonas aeruginosa (strain ATCC 15692 / DSM 22644 / CIP 104116 / JCM 14847 / LMG 12228 / 1C / PRS 101 / PAO1)).